The sequence spans 508 residues: ATP synthase subunit alpha, chloroplastic (508 aa).

Residue 173-180 participates in ATP binding; that stretch reads GDRQTGKT.

It belongs to the ATPase alpha/beta chains family. As to quaternary structure, F-type ATPases have 2 components, CF(1) - the catalytic core - and CF(0) - the membrane proton channel. CF(1) has five subunits: alpha(3), beta(3), gamma(1), delta(1), epsilon(1). CF(0) has four main subunits: a, b, b' and c.

It is found in the plastid. Its subcellular location is the chloroplast thylakoid membrane. It catalyses the reaction ATP + H2O + 4 H(+)(in) = ADP + phosphate + 5 H(+)(out). Produces ATP from ADP in the presence of a proton gradient across the membrane. The alpha chain is a regulatory subunit. This chain is ATP synthase subunit alpha, chloroplastic, found in Chara vulgaris (Common stonewort).